The following is a 28-amino-acid chain: Cycloviolin-B (28 aa).

A cross-link (cyclopeptide (Gly-Asn)) is located at residues 1-28 (GTACGESCYVLPCFTVGCTCTSSQCFKN). Intrachain disulfides connect cysteine 4–cysteine 18, cysteine 8–cysteine 20, and cysteine 13–cysteine 25.

This is a cyclic peptide.

Its function is as follows. Probably participates in a plant defense mechanism. Has anti-HIV activity. This Leonia cymosa (Sacha uba) protein is Cycloviolin-B.